We begin with the raw amino-acid sequence, 455 residues long: uncharacterized protein (455 aa).

An N-terminal signal peptide occupies residues 1-27 (MSQRQQFQFLLSFLILIFLKFIIQIRC). Residues 29 to 434 (ESNGVIIIKN…GDDENLINSS (406 aa)) are Extracellular-facing. 4 N-linked (GlcNAc...) asparagine glycosylation sites follow: asparagine 136, asparagine 148, asparagine 210, and asparagine 298. Residues 383–402 (SSSTTSTTSSSSSSSSSTTT) form a disordered region. 2 N-linked (GlcNAc...) asparagine glycosylation sites follow: asparagine 421 and asparagine 432. Residues 435-455 (SVIKFSTPIIMIIIILINIKF) traverse the membrane as a helical segment.

The protein localises to the membrane. This is an uncharacterized protein from Dictyostelium discoideum (Social amoeba).